We begin with the raw amino-acid sequence, 343 residues long: 4-hydroxy-2-oxovalerate aldolase 2 (343 aa).

One can recognise a Pyruvate carboxyltransferase domain in the interval 8-260 (ITVHDMSLRD…ETGVDVFAIS (253 aa)). Position 16-17 (16-17 (RD)) interacts with substrate. A Mn(2+)-binding site is contributed by D17. The active-site Proton acceptor is H20. Positions 170 and 199 each coordinate substrate. Mn(2+)-binding residues include H199 and H201. Residue Y290 coordinates substrate.

This sequence belongs to the 4-hydroxy-2-oxovalerate aldolase family.

The enzyme catalyses (S)-4-hydroxy-2-oxopentanoate = acetaldehyde + pyruvate. The polypeptide is 4-hydroxy-2-oxovalerate aldolase 2 (Burkholderia lata (strain ATCC 17760 / DSM 23089 / LMG 22485 / NCIMB 9086 / R18194 / 383)).